The chain runs to 375 residues: Chaperone protein DnaJ (375 aa).

The region spanning 5–70 (DFYETLGVAK…QKRAAYDRYG (66 aa)) is the J domain. A CR-type zinc finger spans residues 136 to 214 (GKTAQIRVPT…CHGQGRVTEE (79 aa)). C149, C152, C166, C169, C188, C191, C202, and C205 together coordinate Zn(2+). CXXCXGXG motif repeat units lie at residues 149 to 156 (CDVCSGSG), 166 to 173 (CGTCQGTG), 188 to 195 (CPTCHGRG), and 202 to 209 (CPKCHGQG).

This sequence belongs to the DnaJ family. As to quaternary structure, homodimer. Zn(2+) is required as a cofactor.

It is found in the cytoplasm. Its function is as follows. Participates actively in the response to hyperosmotic and heat shock by preventing the aggregation of stress-denatured proteins and by disaggregating proteins, also in an autonomous, DnaK-independent fashion. Unfolded proteins bind initially to DnaJ; upon interaction with the DnaJ-bound protein, DnaK hydrolyzes its bound ATP, resulting in the formation of a stable complex. GrpE releases ADP from DnaK; ATP binding to DnaK triggers the release of the substrate protein, thus completing the reaction cycle. Several rounds of ATP-dependent interactions between DnaJ, DnaK and GrpE are required for fully efficient folding. Also involved, together with DnaK and GrpE, in the DNA replication of plasmids through activation of initiation proteins. In Rhizobium johnstonii (strain DSM 114642 / LMG 32736 / 3841) (Rhizobium leguminosarum bv. viciae), this protein is Chaperone protein DnaJ.